The primary structure comprises 630 residues: 1-deoxy-D-xylulose-5-phosphate synthase (630 aa).

Thiamine diphosphate is bound by residues His73 and 114–116 (SHA). Asp146 is a Mg(2+) binding site. Thiamine diphosphate-binding positions include 147-148 (GA), Asn176, Phe287, and Glu371. Asn176 is a Mg(2+) binding site.

This sequence belongs to the transketolase family. DXPS subfamily. As to quaternary structure, homodimer. Mg(2+) serves as cofactor. It depends on thiamine diphosphate as a cofactor.

It catalyses the reaction D-glyceraldehyde 3-phosphate + pyruvate + H(+) = 1-deoxy-D-xylulose 5-phosphate + CO2. Its pathway is metabolic intermediate biosynthesis; 1-deoxy-D-xylulose 5-phosphate biosynthesis; 1-deoxy-D-xylulose 5-phosphate from D-glyceraldehyde 3-phosphate and pyruvate: step 1/1. Functionally, catalyzes the acyloin condensation reaction between C atoms 2 and 3 of pyruvate and glyceraldehyde 3-phosphate to yield 1-deoxy-D-xylulose-5-phosphate (DXP). In Corynebacterium jeikeium (strain K411), this protein is 1-deoxy-D-xylulose-5-phosphate synthase.